Consider the following 198-residue polypeptide: Pyridoxine/pyridoxamine 5'-phosphate oxidase (198 aa).

FMN contacts are provided by residues 47–52 (RMVLVK), 62–63 (FT), Arg68, Lys69, and Gln91. Lys52 lines the substrate pocket. Tyr109, Arg113, and Ser117 together coordinate substrate. Residues 126 to 127 (QS) and Trp171 each bind FMN. 177 to 179 (RLH) contributes to the substrate binding site. Arg181 serves as a coordination point for FMN.

It belongs to the pyridoxamine 5'-phosphate oxidase family. In terms of assembly, homodimer. The cofactor is FMN.

The enzyme catalyses pyridoxamine 5'-phosphate + O2 + H2O = pyridoxal 5'-phosphate + H2O2 + NH4(+). It catalyses the reaction pyridoxine 5'-phosphate + O2 = pyridoxal 5'-phosphate + H2O2. It functions in the pathway cofactor metabolism; pyridoxal 5'-phosphate salvage; pyridoxal 5'-phosphate from pyridoxamine 5'-phosphate: step 1/1. It participates in cofactor metabolism; pyridoxal 5'-phosphate salvage; pyridoxal 5'-phosphate from pyridoxine 5'-phosphate: step 1/1. Catalyzes the oxidation of either pyridoxine 5'-phosphate (PNP) or pyridoxamine 5'-phosphate (PMP) into pyridoxal 5'-phosphate (PLP). This Anaeromyxobacter dehalogenans (strain 2CP-C) protein is Pyridoxine/pyridoxamine 5'-phosphate oxidase.